The chain runs to 142 residues: Large ribosomal subunit protein uL13 (142 aa).

Belongs to the universal ribosomal protein uL13 family. Part of the 50S ribosomal subunit.

In terms of biological role, this protein is one of the early assembly proteins of the 50S ribosomal subunit, although it is not seen to bind rRNA by itself. It is important during the early stages of 50S assembly. The protein is Large ribosomal subunit protein uL13 of Hamiltonella defensa subsp. Acyrthosiphon pisum (strain 5AT).